A 148-amino-acid chain; its full sequence is MDKYTIRQLFMYLSDNQYVYCRKCIFTPLRGDLNDCKNCPQSYSKNKDIIWFLTPPTTPTNYYNYLKDSHDYKQSCIETRVIVDFCVWCSLTNTMRTKNILNEFFKTYKNGTLHSSTKLNVIDTMNDLGFFNNNFKLIDEDASEFENY.

This is an uncharacterized protein from Acheta domesticus (House cricket).